A 209-amino-acid polypeptide reads, in one-letter code: MAAILGKKIGMTSIYNANREAEPCTVIQAGPCFVSQVKTTENDGYEAYQLSIGERKEAKVSKPLRGHFAKAGIAPGYKVVEFGKDDMGLDLEQGSAVSVEIFSAGDAVEVQGVSKGKGFAGVVKRHNFSGGQRTHGQSDRLRAPGSVGGASDPSRTFKGTKMGGRMGGKTVKVKGLEIVKVIPESNLLVIKGSVPGVKNSYVQIVSSKK.

Positions 127–164 (NFSGGQRTHGQSDRLRAPGSVGGASDPSRTFKGTKMGG) are disordered.

This sequence belongs to the universal ribosomal protein uL3 family. Part of the 50S ribosomal subunit. Forms a cluster with proteins L14 and L19.

One of the primary rRNA binding proteins, it binds directly near the 3'-end of the 23S rRNA, where it nucleates assembly of the 50S subunit. The polypeptide is Large ribosomal subunit protein uL3 (Chlorobium phaeobacteroides (strain BS1)).